The following is an 833-amino-acid chain: Urease (833 aa).

The Urease domain maps to 395 to 833 (GALDVHVHYI…LPLTRRYFVY (439 aa)). Residues His400 and His402 each contribute to the Ni(2+) site. 2 residues coordinate urea: His402 and Ala433. Ni(2+) is bound at residue Lys483. At Lys483 the chain carries N6-carboxylysine. Residues His485 and His512 each coordinate urea. The Ni(2+) site is built by His512 and His538. The active-site Proton donor is the His586. Asp626 lines the Ni(2+) pocket. Ala629 provides a ligand contact to urea.

The protein in the C-terminal section; belongs to the metallo-dependent hydrolases superfamily. Urease alpha subunit family. As to quaternary structure, homohexamer. Ni(2+) serves as cofactor. In terms of processing, carboxylation allows a single lysine to coordinate two nickel ions.

It catalyses the reaction urea + 2 H2O + H(+) = hydrogencarbonate + 2 NH4(+). It functions in the pathway nitrogen metabolism; urea degradation; CO(2) and NH(3) from urea (urease route): step 1/1. The urease accessory proteins URE4, URE6 and URE7 are required for urease activity, URE7 supplying nickel for the functional urease. In terms of biological role, plays a nutritional role via nitrogen acquisition in the environment. Contributes to the central nervous system invasion by enhancing yeast sequestration within microcapillary beds (such as within the brain) during hematogenous spread, thereby facilitating blood-to-brain invasion by C.neoformans. Affects fitness within the mammalian phagosome, promoting non-lytic exocytosis while delaying intracellular replication and thus reducing phagolysosomal membrane damage, events that could facilitate cryptococcal dissemination when transported inside macrophages. Urease activity is also associated with the regulation of key intracellular metabolic pathways, including melanin biosynthesis, polyamine biosynthesis, as well as intracellular levels of proline and reactive oxygen species. The polypeptide is Urease (Cryptococcus neoformans var. grubii serotype A (strain H99 / ATCC 208821 / CBS 10515 / FGSC 9487) (Filobasidiella neoformans var. grubii)).